We begin with the raw amino-acid sequence, 549 residues long: MSKPWGGIGAWADEAERADEEQAAEATATAADSQSFPSLKEAATAKSSKKKKKMTLSEFTKGAYTAPSSAGLTREQMLQLPTGPRQRSEDEMQPGRLGGGFSSYGGGRSSGPPGRMSRDREDSDGSWGGGGGGRRSYGGFDDDQRGSNSRVSDFPQVSRADEDDDWGKGKKSLPSFDQGRQGSRYGGGGGSFGGGGGGGAGSYGGGGAGAGSGGGGGFSKADEVDNWAAGKAKSSTFGSGFRESGPEPDRWARGVLPSGGGVQEERRRLVFEPRKADTEVSETPTAVKTSKPSPFGAARPREQVLAEKGLDWKKLDSDIEAKKGQTSRPSSAQSSRPSSAQSNRSESSALNNVENVVKPRPKVNPFGDAKPREVLLEEQGKDWRKIDSELEHRRVDRPETEGERMLKEEIEELRKKLEKEAAIAPESKESQQESDSNHQNLPDLIREKEKNLDLLIRELDDKVRFRPRAVERPGSSASRGGSYSERPHSRAGSIDESRSVESMERPRSHGTGDNWPRPVDDRRNFQGSKERGFFNNRNFDRSSSAREGW.

Disordered regions lie at residues Met-1–Arg-446 and Phe-465–Trp-549. A compositionally biased stretch (low complexity) spans Ala-24–Lys-46. 2 stretches are compositionally biased toward gly residues: residues Arg-96–Ser-109 and Ser-126–Ser-136. The Nuclear localization signal 1 motif lies at Gly-169–Phe-176. The span at Arg-184–Phe-218 shows a compositional bias: gly residues. Residues Ser-234–Phe-241 carry the Nuclear localization signal 2 motif. The segment covering Gln-263–Thr-278 has biased composition (basic and acidic residues). Polar residues predominate over residues Ser-281 to Pro-292. The segment covering Arg-299–Lys-323 has biased composition (basic and acidic residues). The segment covering Ser-327–Ala-349 has biased composition (low complexity). Basic and acidic residues-rich tracts occupy residues Ala-369 to Gln-431, Glu-485 to Arg-507, and Pro-518 to Trp-549.

This sequence belongs to the eIF-4 subunit B family. Homodimer. Nonspherical monomer. mRNA-discriminating component of initiation complexes. Phosphorylated.

It is found in the nucleus. Functionally, promotes the eIF4F and eIF4A RNA-dependent ATP-hydrolysis activity with different efficiency depending on mRNAs, thus providing mRNA discrimination during initiation of translation. This chain is Eukaryotic translation initiation factor 4B2, found in Arabidopsis thaliana (Mouse-ear cress).